Reading from the N-terminus, the 321-residue chain is MIFLFRALKPLLVLALLTVVFVLGGCSNASVLDPKGPVAEQQSDLILLSIGFMLFIVGVVFVLFTIILVKYRDRKGKDNGSYNPKIHGNTFLEVVWTVIPILIVIALSVPTVQTIYSLEKAPEATKDKEPLVVHATSVDWKWVFSYPEQDIETVNYLNIPVDRPILFKISSADSMASLWIPQLGGQKYAMAGMLMDQYLQADEVGTYQGRNANFTGEHFADQEFDVNAVTEKDFNSWVKKTQNEAPKLTKEKYDQLMLPENVDELTFSSTHLKYVDHGQDAEYAMEARKRLGYQAVSPHSKTDPFENVKENEFKKSDDTEE.

The N-terminal stretch at 1–25 (MIFLFRALKPLLVLALLTVVFVLGG) is a signal peptide. The N-palmitoyl cysteine moiety is linked to residue cysteine 26. A lipid anchor (S-diacylglycerol cysteine) is attached at cysteine 26. 2 consecutive transmembrane segments (helical) span residues 49 to 69 (SIGFMLFIVGVVFVLFTIILV) and 90 to 110 (TFLEVVWTVIPILIVIALSVP). The disordered stretch occupies residues 294-321 (QAVSPHSKTDPFENVKENEFKKSDDTEE). Over residues 300-321 (SKTDPFENVKENEFKKSDDTEE) the composition is skewed to basic and acidic residues.

This sequence belongs to the cytochrome c oxidase subunit 2 family.

Its subcellular location is the cell membrane. The catalysed reaction is 2 a quinol + O2 = 2 a quinone + 2 H2O. In terms of biological role, catalyzes quinol oxidation with the concomitant reduction of oxygen to water. Major component for energy conversion during vegetative growth. Subunit II transfers the electrons from a quinol to the binuclear center of the catalytic subunit I. This is Quinol oxidase subunit 2 (qoxA) from Bacillus spizizenii (strain ATCC 23059 / NRRL B-14472 / W23) (Bacillus subtilis subsp. spizizenii).